Consider the following 171-residue polypeptide: CASP-like protein 5A2 (171 aa).

Topologically, residues 1–39 are cytoplasmic; it reads MDGSAHLRDPPGPAVLRWRLEDMHIIPGTSGSLALRICQ. A helical membrane pass occupies residues 40 to 60; it reads FSAAIVSFSVMISAANFSSVT. Ala-61 is a topological domain (extracellular). A helical transmembrane segment spans residues 62–82; sequence FCFLVAAMVLQCMWSLSVATI. Over 83 to 106 the chain is Cytoplasmic; it reads EGYAMLVGRSLRDSPLLSLFAVGD. The chain crosses the membrane as a helical span at residues 107 to 127; sequence WVTAVITFAGACASAGIAVLV. The Extracellular segment spans residues 128-148; it reads GRDIHRGCDVNFCGRYAAAAG. A helical membrane pass occupies residues 149-169; the sequence is MAFLSWLLISTSFLFTFWLLA. At 170–171 the chain is on the cytoplasmic side; it reads TR.

The protein belongs to the Casparian strip membrane proteins (CASP) family. As to quaternary structure, homodimer and heterodimers.

The protein localises to the cell membrane. This chain is CASP-like protein 5A2, found in Pteridium aquilinum subsp. aquilinum (Bracken fern).